The primary structure comprises 179 residues: ATP synthase subunit delta (179 aa).

Belongs to the ATPase delta chain family. As to quaternary structure, F-type ATPases have 2 components, F(1) - the catalytic core - and F(0) - the membrane proton channel. F(1) has five subunits: alpha(3), beta(3), gamma(1), delta(1), epsilon(1). F(0) has three main subunits: a(1), b(2) and c(10-14). The alpha and beta chains form an alternating ring which encloses part of the gamma chain. F(1) is attached to F(0) by a central stalk formed by the gamma and epsilon chains, while a peripheral stalk is formed by the delta and b chains.

Its subcellular location is the cell inner membrane. Functionally, f(1)F(0) ATP synthase produces ATP from ADP in the presence of a proton or sodium gradient. F-type ATPases consist of two structural domains, F(1) containing the extramembraneous catalytic core and F(0) containing the membrane proton channel, linked together by a central stalk and a peripheral stalk. During catalysis, ATP synthesis in the catalytic domain of F(1) is coupled via a rotary mechanism of the central stalk subunits to proton translocation. In terms of biological role, this protein is part of the stalk that links CF(0) to CF(1). It either transmits conformational changes from CF(0) to CF(1) or is implicated in proton conduction. The sequence is that of ATP synthase subunit delta from Bordetella petrii (strain ATCC BAA-461 / DSM 12804 / CCUG 43448).